The following is a 118-amino-acid chain: Large ribosomal subunit protein bL19 (118 aa).

The protein belongs to the bacterial ribosomal protein bL19 family.

This protein is located at the 30S-50S ribosomal subunit interface and may play a role in the structure and function of the aminoacyl-tRNA binding site. The chain is Large ribosomal subunit protein bL19 from Herpetosiphon aurantiacus (strain ATCC 23779 / DSM 785 / 114-95).